A 134-amino-acid chain; its full sequence is Ribonuclease P protein component (134 aa).

This sequence belongs to the RnpA family. Consists of a catalytic RNA component (M1 or rnpB) and a protein subunit.

The catalysed reaction is Endonucleolytic cleavage of RNA, removing 5'-extranucleotides from tRNA precursor.. In terms of biological role, RNaseP catalyzes the removal of the 5'-leader sequence from pre-tRNA to produce the mature 5'-terminus. It can also cleave other RNA substrates such as 4.5S RNA. The protein component plays an auxiliary but essential role in vivo by binding to the 5'-leader sequence and broadening the substrate specificity of the ribozyme. This chain is Ribonuclease P protein component, found in Pseudomonas putida (strain GB-1).